Reading from the N-terminus, the 207-residue chain is Large ribosomal subunit protein uL3 (207 aa).

Residues 113 to 148 (KGKGFQGPIKRHGQSRGPMAHGSRYHRRPGSMGPVA) are disordered.

The protein belongs to the universal ribosomal protein uL3 family. Part of the 50S ribosomal subunit. Forms a cluster with proteins L14 and L19.

Functionally, one of the primary rRNA binding proteins, it binds directly near the 3'-end of the 23S rRNA, where it nucleates assembly of the 50S subunit. The chain is Large ribosomal subunit protein uL3 from Lactococcus lactis subsp. lactis (strain IL1403) (Streptococcus lactis).